Here is a 1742-residue protein sequence, read N- to C-terminus: NACHT and WD repeat domain-containing protein 2 (1742 aa).

LRR repeat units follow at residues 386–410 (FYEY…GHIN), 677–698 (LEDV…TRPS), 724–747 (VKNV…LYLQ), 883–906 (YSQE…VIAF), and 925–953 (LPKL…SSMD). Positions 410-737 (NPLVVYGGPC…TLLVWANRHL (328 aa)) constitute an NACHT domain. WD repeat units follow at residues 963–1004 (LASS…LLRQ), 1007–1046 (TAQS…LLSE), 1140–1179 (FSGG…NPQL), 1229–1271 (RHNE…ASLQ), 1272–1311 (ESSG…AMSN), 1314–1353 (KTGK…IEAV), 1355–1394 (KHEG…NLFR), 1396–1434 (NGQR…RVCN), 1476–1516 (EDGI…ICRR), 1522–1561 (NFLK…LRVV), and 1614–1653 (SLYK…DAAL). The disordered stretch occupies residues 1702–1721 (PITVSDSSESNEATPSKKHN). Over residues 1703–1715 (ITVSDSSESNEAT) the composition is skewed to polar residues.

In Mus musculus (Mouse), this protein is NACHT and WD repeat domain-containing protein 2 (Nwd2).